The sequence spans 142 residues: ATP synthase epsilon chain (142 aa).

It belongs to the ATPase epsilon chain family. F-type ATPases have 2 components, CF(1) - the catalytic core - and CF(0) - the membrane proton channel. CF(1) has five subunits: alpha(3), beta(3), gamma(1), delta(1), epsilon(1). CF(0) has three main subunits: a, b and c.

The protein resides in the cell inner membrane. Produces ATP from ADP in the presence of a proton gradient across the membrane. The polypeptide is ATP synthase epsilon chain (Shewanella sp. (strain ANA-3)).